The sequence spans 532 residues: Zinc metalloproteinase nas-29 (532 aa).

Positions 1 to 22 are cleaved as a signal peptide; sequence MISKNTSFCGFLILVLATCMSA. N-linked (GlcNAc...) asparagine glycosylation is found at Asn5, Asn27, Asn70, and Asn106. The propeptide occupies 23 to 134; that stretch reads QFVSNESIKL…NGESTDRTKR (112 aa). One can recognise a Peptidase M12A domain in the interval 135–335; that stretch reads QAYLDNNYPA…HIMNQHYQCQ (201 aa). 6 cysteine pairs are disulfide-bonded: Cys179/Cys334, Cys201/Cys222, Cys338/Cys358, Cys360/Cys369, Cys380/Cys408, and Cys435/Cys456. His230 is a Zn(2+) binding site. Glu231 is a catalytic residue. The Zn(2+) site is built by His234 and His240. One can recognise an EGF-like domain in the interval 330 to 370; the sequence is QHYQCQEKCPTQAPCQNGGFTNSRNCKVCKCPTGFGGAYCQ. The CUB domain maps to 380 to 494; sequence CGGYLNAEET…VSFEYSFVST (115 aa). An N-linked (GlcNAc...) asparagine glycan is attached at Asn503.

Zn(2+) is required as a cofactor.

It localises to the secreted. In terms of biological role, metalloprotease. The chain is Zinc metalloproteinase nas-29 (nas-29) from Caenorhabditis elegans.